A 513-amino-acid polypeptide reads, in one-letter code: Tigger transposable element-derived protein 4 (513 aa).

The region spanning 12–63 is the HTH psq-type domain; it reads PVTVKKKKSLSIEEKIDIINAVESGKKKAEIAAEYGIKKNSLSSIMKNKDKV. DNA-binding regions (H-T-H motif) lie at residues 39 to 59 and 108 to 139; these read KAEI…IMKN and PMLR…FKSR. The 72-residue stretch at 75-146 folds into the HTH CENPB-type domain; it reads KRKRLRTAFY…KSRYGLVFRA (72 aa). The DDE-1 domain maps to 174-375; the sequence is YHPKNVFNVK…VTPETIVKSY (202 aa). The segment covering 433–448 has biased composition (basic and acidic residues); that stretch reads TQKDDAEWAGESKQDE. The interval 433-473 is disordered; it reads TQKDDAEWAGESKQDETGLYTSDEEEEDSGALEVDLPSPSK.

This sequence belongs to the tigger transposable element derived protein family.

It localises to the nucleus. This is Tigger transposable element-derived protein 4 (Tigd4) from Mus musculus (Mouse).